Here is a 208-residue protein sequence, read N- to C-terminus: Thymidylate kinase (208 aa).

ATP is bound at residue 10-17 (GPEGSGKT).

Belongs to the thymidylate kinase family.

The enzyme catalyses dTMP + ATP = dTDP + ADP. Its function is as follows. Phosphorylation of dTMP to form dTDP in both de novo and salvage pathways of dTTP synthesis. This Bacillus cereus (strain B4264) protein is Thymidylate kinase.